Reading from the N-terminus, the 767-residue chain is Start control protein cdc10 (767 aa).

The interval 17 to 44 (FSYQKRPEDEPSQPLSNRNINKLNDSST) is disordered. Polar residues predominate over residues 29-44 (QPLSNRNINKLNDSST). The HTH APSES-type domain maps to 66–173 (ELYAVECSGM…FNLDLFPKFS (108 aa)). Residues 98-119 (ISQILRLAGTSSSENAKELDDI) constitute a DNA-binding region (H-T-H motif). The segment at 189–230 (TSSFNTRSPLRNHNFSNPSKSSKNGVHTINNMQSSPSPSSSF) is disordered. Polar residues predominate over residues 192-221 (FNTRSPLRNHNFSNPSKSSKNGVHTINNMQ). S252 is modified (phosphoserine). The Nuclear localization signal signature appears at 261–264 (KRHR). 2 ANK repeats span residues 356–385 (LGHA…NPLR) and 483–512 (NGDT…SAYI). The tract at residues 542–562 (VSLMSENLSSKEKTAVPPRQK) is disordered.

DSC1 contains cdc10 and sct1/res1. Interacts with pol5.

Its subcellular location is the nucleus. Major component of the cell cycle transcription factor complex MBF (MCB binding factor, also known as DSC1), that controls G1-S phase specific gene expression. Involved in the control of rRNA production, via interaction with pol5. May be involved in the transcriptional regulation of the cdc22 and cdt1 genes. In fission yeast, two genes, cdc10 and cdc2, are required for the cell cycle control called start, the point early in the G1 phase at which cells become committed to the mitotic cycle. In Schizosaccharomyces pombe (strain 972 / ATCC 24843) (Fission yeast), this protein is Start control protein cdc10 (cdc10).